The following is a 240-amino-acid chain: Large ribosomal subunit protein uL2 (240 aa).

The span at 1-11 shows a compositional bias: polar residues; sequence MGKRLISQNRG. Disordered regions lie at residues 1–28 and 206–240; these read MGKRLISQNRGRGTPKYRSPTHKRKGAV and GGGRHQHLGKPSSVSRHTSPGRKVGHIASRRTGRK. Basic residues-rich tracts occupy residues 13–28 and 224–240; these read GTPKYRSPTHKRKGAV and SPGRKVGHIASRRTGRK.

Belongs to the universal ribosomal protein uL2 family. Part of the 50S ribosomal subunit. Forms a bridge to the 30S subunit in the 70S ribosome.

Functionally, one of the primary rRNA binding proteins. Required for association of the 30S and 50S subunits to form the 70S ribosome, for tRNA binding and peptide bond formation. It has been suggested to have peptidyltransferase activity; this is somewhat controversial. Makes several contacts with the 16S rRNA in the 70S ribosome. This chain is Large ribosomal subunit protein uL2, found in Methanococcus maripaludis (strain C5 / ATCC BAA-1333).